A 473-amino-acid chain; its full sequence is Protein translocase subunit SecA (473 aa).

ATP is bound at residue D127. The disordered stretch occupies residues V424–K447. Zn(2+) is bound by residues C457, C459, C468, and C469.

The protein belongs to the SecA family. As to quaternary structure, monomer and homodimer. Part of the essential Sec protein translocation apparatus which comprises SecA, SecYEG and auxiliary proteins SecDF. Other proteins may also be involved. Zn(2+) serves as cofactor.

The protein resides in the cell membrane. Its subcellular location is the cytoplasm. It catalyses the reaction ATP + H2O + cellular proteinSide 1 = ADP + phosphate + cellular proteinSide 2.. Its function is as follows. Part of the Sec protein translocase complex. Interacts with the SecYEG preprotein conducting channel. Has a central role in coupling the hydrolysis of ATP to the transfer of proteins into and across the cell membrane, serving as an ATP-driven molecular motor driving the stepwise translocation of polypeptide chains across the membrane. The polypeptide is Protein translocase subunit SecA (Cytobacillus firmus (Bacillus firmus)).